Here is a 263-residue protein sequence, read N- to C-terminus: Proenkephalin-A (263 aa).

The N-terminal stretch at 1–24 is a signal peptide; sequence MARFLGLCTWLLALGPGLLATVRA. 3 cysteine pairs are disulfide-bonded: C26-C48, C30-C52, and C33-C65. 2 propeptides span residues 192-203 and 213-223; these read SPHLEDETKELQ and VGRPEWWMDYQ. Position 247 is a phosphoserine (S247).

It belongs to the opioid neuropeptide precursor family. Post-translationally, proenkephalin-A is cleaved by CTSL to generate Met-enkephalin. Processed and degraded by ACE. In terms of processing, probably cleaved by ACE. Post-translationally, processed by ACE to generate Met-enkephalin in the nucleus accumbens of the brain. The N-terminal domain contains 6 conserved cysteines thought to be involved in disulfide bonding and/or processing. As to expression, secreted by neuroendocrine chromaffin cells through cromaffin granules.

Its subcellular location is the cytoplasmic vesicle. The protein resides in the secretory vesicle. The protein localises to the chromaffin granule lumen. It localises to the secreted. Functionally, neuropeptide that competes with and mimic the effects of opiate drugs. They play a role in a number of physiologic functions, including pain perception and responses to stress. In terms of biological role, met-enkephalin-Arg-Phe neuropeptide acts as a strong ligand of Mu-type opioid receptor OPRM1. Met-enkephalin-Arg-Phe-binding to OPRM1 in the nucleus accumbens of the brain increases activation of OPRM1, leading to long-term synaptic depression of glutamate release. Its function is as follows. Increases glutamate release in the striatum and decreases GABA concentration in the striatum. Increases glutamate release in the striatum. Functionally, enkelytin possesses antibacterial activity against Gram-positive bacteria such as Micrococcus luteus and Bacillus megaterium. This Bos taurus (Bovine) protein is Proenkephalin-A (PENK).